Consider the following 243-residue polypeptide: Isoprenyl transferase 2 (243 aa).

The active site involves aspartate 23. Aspartate 23 is a Mg(2+) binding site. Substrate is bound by residues 24 to 27 (GNGR), tryptophan 28, arginine 36, histidine 40, and 68 to 70 (STE). Catalysis depends on asparagine 71, which acts as the Proton acceptor. Residues tryptophan 72, arginine 74, arginine 191, and 197-199 (RTS) contribute to the substrate site. Mg(2+) is bound at residue glutamate 210.

It belongs to the UPP synthase family. As to quaternary structure, homodimer. It depends on Mg(2+) as a cofactor.

Its function is as follows. Catalyzes the condensation of isopentenyl diphosphate (IPP) with allylic pyrophosphates generating different type of terpenoids. This is Isoprenyl transferase 2 from Corynebacterium glutamicum (strain ATCC 13032 / DSM 20300 / JCM 1318 / BCRC 11384 / CCUG 27702 / LMG 3730 / NBRC 12168 / NCIMB 10025 / NRRL B-2784 / 534).